The primary structure comprises 506 residues: MEEFQGYLELDRYQQHDFLYPLIFREYIYALAHDHGLNRSILLDNVGYDNKSSLLIIKRLISRMYKHNHFFISANASNQKKKLGYNKNLYSQKISEGFTVIVEISFSLRLVSSLEATETVKSYNLRSIHSIFPFLEDKFPHLNYVSDVLIPYPIHLEILVQTLRYWVKDASSLHLLRLFLHEYYNWNSLITSNNFFFSKSNPRLFLLLYNSHVCEYEFILLFLRNQSSHLQLTSSGIFFERIHFYEKIKYPVEKVFANDFPASILWFFKDPFMHYVRYQGKSILASKDTPLLMNKWKYYLVNLWQCHSYVWSQPGRIYINKLSKHSLDFLGYFSSIRPNLSVVRSQMLENSFITDNAMKKLDTLVPIIPLIGSLAKVKFCNALGHPISKSTWADSSDFDIIDRFLRICRNLSHYYSGSSRKKSLYRIKYILRLSCLKTLARKHKSTVRTFLKRLGSKLLEEFFTEEEQILSLVFPRASYTFTFKKLYRGRIWYLDIFCINDLINYE.

It belongs to the intron maturase 2 family. MatK subfamily.

The protein localises to the plastid. Its subcellular location is the chloroplast. Usually encoded in the trnK tRNA gene intron. Probably assists in splicing its own and other chloroplast group II introns. This is Maturase K from Prunus persica (Peach).